The chain runs to 1391 residues: Eukaryotic translation initiation factor 3 subunit A (1391 aa).

Positions 315–498 (MQRMSTRVLL…RTLSFGSDLN (184 aa)) constitute a PCI domain. Basic and acidic residues-rich tracts occupy residues 809–921 (DKEE…RGGP), 940–959 (AALRKDEEQVSSRAFEEKVS), 966–1234 (EKGG…RDQT), 1246–1257 (GWREREKAREDS), 1265–1307 (QAPE…ETPR), and 1313–1380 (DSDR…IKPE). Residues 809–1391 (DKEEEEERLR…DEDGWTTVRR (583 aa)) form a disordered region. 2 consecutive repeat copies span residues 973–982 (DEDRGPKRGL) and 983–992 (EEDRGPRRGI). The tract at residues 973 to 1229 (DEDRGPKRGL…DDDRGPRRGE (257 aa)) is 26 X 10 AA approximate tandem repeats of [DE]-[DE]-[DE]-R-[GATV]-[PS]-[KRW]-R-G-[AEFGIL]. The stretch at 993–1001 (DDAGPRRGF) is one 3; approximate repeat. Tandem repeats lie at residues 1002 to 1011 (EEDRGPRRGI), 1012 to 1021 (EDDRAPRRGF), 1022 to 1031 (DDDRGPRRGF), 1032 to 1041 (DDDRGPRRGF), 1042 to 1051 (DEDRGPRRGI), 1052 to 1061 (DDDRGPRRGF), 1062 to 1071 (DEDRTPRRGF), 1072 to 1081 (DDDRGPRRGF), 1082 to 1091 (DDDRGPRRGF), 1092 to 1101 (DEDRGPRRGF), 1102 to 1111 (EDDRGPRRGF), 1112 to 1120 (EDDRGPRRG), 1122 to 1131 (EDDRGPRRGF), 1132 to 1141 (EDDRGPRRGF), 1142 to 1151 (EDDRGPRRGF), 1152 to 1161 (DEDRGPRRGF), 1162 to 1171 (EDDRGPRRGF), 1172 to 1181 (DEDRTPRRGF), 1182 to 1191 (DDDRGPRRGL), and 1192 to 1201 (DEDRGSWRGG). One copy of the 24; approximate repeat lies at 1202-1209 (DDVPRRGA). 2 consecutive repeat copies span residues 1210–1219 (DDDRGPRRGA) and 1220–1229 (DDDRGPRRGE).

The protein belongs to the eIF-3 subunit A family. In terms of assembly, component of the eukaryotic translation initiation factor 3 (eIF-3) complex, which is composed of 13 subunits: eif3a, eif3b, eif3c, eif3d, eif3e, eif3f, eif3g, eif3h, eif3i, eif3j, eif3k, eif3l and eif3m.

It localises to the cytoplasm. In terms of biological role, RNA-binding component of the eukaryotic translation initiation factor 3 (eIF-3) complex, which is involved in protein synthesis of a specialized repertoire of mRNAs and, together with other initiation factors, stimulates binding of mRNA and methionyl-tRNAi to the 40S ribosome. The eIF-3 complex specifically targets and initiates translation of a subset of mRNAs involved in cell proliferation. This is Eukaryotic translation initiation factor 3 subunit A (eif3a) from Xenopus tropicalis (Western clawed frog).